A 326-amino-acid chain; its full sequence is Probable cell division protein WhiA (326 aa).

Positions 275-308 (SLDELGHYADPPMTKDAVAGRIRRLLAMADKRAS) form a DNA-binding region, H-T-H motif.

This sequence belongs to the WhiA family.

In terms of biological role, involved in cell division and chromosome segregation. This is Probable cell division protein WhiA from Leifsonia xyli subsp. xyli (strain CTCB07).